A 1399-amino-acid polypeptide reads, in one-letter code: DNA-directed RNA polymerase subunit beta' (1399 aa).

C70, C72, C85, and C88 together coordinate Zn(2+). 3 residues coordinate Mg(2+): D460, D462, and D464. The Zn(2+) site is built by C814, C888, C895, and C898.

It belongs to the RNA polymerase beta' chain family. In terms of assembly, the RNAP catalytic core consists of 2 alpha, 1 beta, 1 beta' and 1 omega subunit. When a sigma factor is associated with the core the holoenzyme is formed, which can initiate transcription. It depends on Mg(2+) as a cofactor. Requires Zn(2+) as cofactor.

It carries out the reaction RNA(n) + a ribonucleoside 5'-triphosphate = RNA(n+1) + diphosphate. Functionally, DNA-dependent RNA polymerase catalyzes the transcription of DNA into RNA using the four ribonucleoside triphosphates as substrates. The polypeptide is DNA-directed RNA polymerase subunit beta' (Pseudomonas putida (strain ATCC 700007 / DSM 6899 / JCM 31910 / BCRC 17059 / LMG 24140 / F1)).